The following is a 248-amino-acid chain: 2,3-bisphosphoglycerate-dependent phosphoglycerate mutase (248 aa).

Residues 8–15 (RHGESEWN), 21–22 (TG), arginine 60, 87–90 (ERHY), lysine 98, 114–115 (RR), and 183–184 (GN) contribute to the substrate site. Histidine 9 acts as the Tele-phosphohistidine intermediate in catalysis. Glutamate 87 (proton donor/acceptor) is an active-site residue.

It belongs to the phosphoglycerate mutase family. BPG-dependent PGAM subfamily.

It carries out the reaction (2R)-2-phosphoglycerate = (2R)-3-phosphoglycerate. It functions in the pathway carbohydrate degradation; glycolysis; pyruvate from D-glyceraldehyde 3-phosphate: step 3/5. Catalyzes the interconversion of 2-phosphoglycerate and 3-phosphoglycerate. The chain is 2,3-bisphosphoglycerate-dependent phosphoglycerate mutase from Borreliella burgdorferi (strain ATCC 35210 / DSM 4680 / CIP 102532 / B31) (Borrelia burgdorferi).